The chain runs to 596 residues: Elongation factor 4 (596 aa).

One can recognise a tr-type G domain in the interval 2-184; sequence KHIRNFSIIA…VIVAKIPPPE (183 aa). GTP-binding positions include 14 to 19 and 131 to 134; these read DHGKST and NKID.

This sequence belongs to the TRAFAC class translation factor GTPase superfamily. Classic translation factor GTPase family. LepA subfamily.

It is found in the cell inner membrane. It catalyses the reaction GTP + H2O = GDP + phosphate + H(+). Functionally, required for accurate and efficient protein synthesis under certain stress conditions. May act as a fidelity factor of the translation reaction, by catalyzing a one-codon backward translocation of tRNAs on improperly translocated ribosomes. Back-translocation proceeds from a post-translocation (POST) complex to a pre-translocation (PRE) complex, thus giving elongation factor G a second chance to translocate the tRNAs correctly. Binds to ribosomes in a GTP-dependent manner. In Shewanella sp. (strain W3-18-1), this protein is Elongation factor 4.